A 121-amino-acid chain; its full sequence is Putative iron-sulfur cluster insertion protein ErpA (121 aa).

3 residues coordinate iron-sulfur cluster: cysteine 49, cysteine 113, and cysteine 115.

The protein belongs to the HesB/IscA family. Homodimer. Requires iron-sulfur cluster as cofactor.

Required for insertion of 4Fe-4S clusters. This chain is Putative iron-sulfur cluster insertion protein ErpA, found in Methylibium petroleiphilum (strain ATCC BAA-1232 / LMG 22953 / PM1).